Consider the following 693-residue polypeptide: Polyribonucleotide nucleotidyltransferase (693 aa).

Residues Asp-489 and Asp-495 each contribute to the Mg(2+) site. The KH domain maps to 556–615; it reads PQIHVMNINPAKIKDVVGRGGATVKGIVEKTGAQIDTSDSGEVKVFAKDKKSMDMAVAMI. The region spanning 625 to 693 is the S1 motif domain; sequence GQVYKGKIVK…GRVKLSLVAR (69 aa).

This sequence belongs to the polyribonucleotide nucleotidyltransferase family. Component of the RNA degradosome, which is a multiprotein complex involved in RNA processing and mRNA degradation. The cofactor is Mg(2+).

Its subcellular location is the cytoplasm. It catalyses the reaction RNA(n+1) + phosphate = RNA(n) + a ribonucleoside 5'-diphosphate. In terms of biological role, involved in mRNA degradation. Catalyzes the phosphorolysis of single-stranded polyribonucleotides processively in the 3'- to 5'-direction. The protein is Polyribonucleotide nucleotidyltransferase of Francisella tularensis subsp. novicida (strain U112).